Reading from the N-terminus, the 261-residue chain is Indole-3-glycerol phosphate synthase (261 aa).

This sequence belongs to the TrpC family.

It carries out the reaction 1-(2-carboxyphenylamino)-1-deoxy-D-ribulose 5-phosphate + H(+) = (1S,2R)-1-C-(indol-3-yl)glycerol 3-phosphate + CO2 + H2O. It functions in the pathway amino-acid biosynthesis; L-tryptophan biosynthesis; L-tryptophan from chorismate: step 4/5. The polypeptide is Indole-3-glycerol phosphate synthase (Campylobacter concisus (strain 13826)).